Here is a 545-residue protein sequence, read N- to C-terminus: MHRIYTFLIFISQLALGLSNNPDIPIQYELANNIMENYQKGLIPKVRKGSPINVTLSLQLYQIIQVNEPQQYLLLNAWAVERWVDQMLGWDPSEFDNETEIMARHDDIWLPDTTLYNSLEMDDSASKKLTHVKLTTLGKNQGAMVELLYPTIYKISCLLNLKYFPFDTQTCRMTFGSWSFDNSLIDYFPRTFTNGPIGLANFLENDAWSVLGTKVNREEKKYTCCPVNYTLLHYDVVIQRKPLYYVLNLIAPTAVITFISIIGFFTSVNPFTNFCNVSSSVHDLRQEKITLGITTLLSMSIMIFMVSDKMPSTSTCVPLIALFYTLMITIISVGTLAASSVIFVQKLGSIGNPPASKTMKWTHRIAPFVLIQMPLVMKQAYAKRAKEEKHRKRMSRKNSMWTKVYHLARDHSKLMETVPDGAVKFNQISDFKNNDIGNMESPRMAESQTSETFAAPMDTSFTESLHIPELNRVASSNSIQSVLKPTEIQLTPYCTRNIVELEWDWVAAVLERVFLIFFTICFLFSAIGINLYGWYIWYTENHFLF.

Positions 1–19 (MHRIYTFLIFISQLALGLS) are cleaved as a signal peptide. Residues 20 to 244 (NNPDIPIQYE…DVVIQRKPLY (225 aa)) are Extracellular-facing. Asn53 and Asn97 each carry an N-linked (GlcNAc...) asparagine glycan. Cystine bridges form between Cys157–Cys171 and Cys224–Cys225. N-linked (GlcNAc...) asparagine glycosylation occurs at Asn228. The helical transmembrane segment at 245–265 (YVLNLIAPTAVITFISIIGFF) threads the bilayer. Asn276 is a glycosylation site (N-linked (GlcNAc...) asparagine). 2 helical membrane-spanning segments follow: residues 287-307 (EKITLGITTLLSMSIMIFMVS) and 317-337 (VPLIALFYTLMITIISVGTLA). Topologically, residues 338 to 512 (ASSVIFVQKL…WDWVAAVLER (175 aa)) are cytoplasmic. Residues 513–533 (VFLIFFTICFLFSAIGINLYG) traverse the membrane as a helical segment.

Belongs to the ligand-gated ion channel (TC 1.A.9) family. Acetylcholine receptor (TC 1.A.9.1) subfamily. In terms of tissue distribution, expressed in the body wall muscles that are arranged into four longitudinal bundles, some mechanosensory neurons, the head muscles and multiple interneurons. Not expressed in motor neurons (at protein level).

It is found in the cell membrane. Its function is as follows. Betaine receptor that functions as a ligand-gated non-selective monovalent cation channel in mechanosensory neurons to maintain basal levels of locomotion. The channel is permeable to Na(+) and K(+) but not to Ba(2+) or Ca(2+) ions. Elicits current in response to betaine, very weak current in response to choline, virtually no current in response to acetylcholine and nicotine, and no current in response to glycine and GABA. The polypeptide is Betaine receptor acr-23 (Caenorhabditis elegans).